Reading from the N-terminus, the 273-residue chain is Ribosomal RNA small subunit methyltransferase A (273 aa).

S-adenosyl-L-methionine contacts are provided by Asn19, Leu21, Gly46, Glu71, Asp94, and Asn117.

This sequence belongs to the class I-like SAM-binding methyltransferase superfamily. rRNA adenine N(6)-methyltransferase family. RsmA subfamily.

The protein resides in the cytoplasm. It catalyses the reaction adenosine(1518)/adenosine(1519) in 16S rRNA + 4 S-adenosyl-L-methionine = N(6)-dimethyladenosine(1518)/N(6)-dimethyladenosine(1519) in 16S rRNA + 4 S-adenosyl-L-homocysteine + 4 H(+). In terms of biological role, specifically dimethylates two adjacent adenosines (A1518 and A1519) in the loop of a conserved hairpin near the 3'-end of 16S rRNA in the 30S particle. May play a critical role in biogenesis of 30S subunits. The chain is Ribosomal RNA small subunit methyltransferase A from Burkholderia ambifaria (strain MC40-6).